A 145-amino-acid chain; its full sequence is ATP synthase epsilon chain (145 aa).

It belongs to the ATPase epsilon chain family. As to quaternary structure, F-type ATPases have 2 components, CF(1) - the catalytic core - and CF(0) - the membrane proton channel. CF(1) has five subunits: alpha(3), beta(3), gamma(1), delta(1), epsilon(1). CF(0) has three main subunits: a, b and c.

Its subcellular location is the cell inner membrane. Its function is as follows. Produces ATP from ADP in the presence of a proton gradient across the membrane. This is ATP synthase epsilon chain from Francisella tularensis subsp. holarctica (strain FTNF002-00 / FTA).